We begin with the raw amino-acid sequence, 458 residues long: Cobyrinate a,c-diamide synthase (458 aa).

The region spanning 254–445 is the GATase cobBQ-type domain; the sequence is KIGVIRDQVF…IHVHFLSDKS (192 aa). C335 functions as the Nucleophile in the catalytic mechanism.

This sequence belongs to the CobB/CbiA family. Mg(2+) is required as a cofactor.

The catalysed reaction is cob(II)yrinate + 2 L-glutamine + 2 ATP + 2 H2O = cob(II)yrinate a,c diamide + 2 L-glutamate + 2 ADP + 2 phosphate + 2 H(+). It functions in the pathway cofactor biosynthesis; adenosylcobalamin biosynthesis; cob(II)yrinate a,c-diamide from sirohydrochlorin (anaerobic route): step 10/10. Functionally, catalyzes the ATP-dependent amidation of the two carboxylate groups at positions a and c of cobyrinate, using either L-glutamine or ammonia as the nitrogen source. This Archaeoglobus fulgidus (strain ATCC 49558 / DSM 4304 / JCM 9628 / NBRC 100126 / VC-16) protein is Cobyrinate a,c-diamide synthase.